A 194-amino-acid polypeptide reads, in one-letter code: [Ribosomal protein uS5]-alanine N-acetyltransferase (194 aa).

The region spanning Leu-18 to Pro-188 is the N-acetyltransferase domain.

Belongs to the acetyltransferase family. RimJ subfamily.

Its subcellular location is the cytoplasm. The catalysed reaction is N-terminal L-alanyl-[ribosomal protein uS5] + acetyl-CoA = N-terminal N(alpha)-acetyl-L-alanyl-[ribosomal protein uS5] + CoA + H(+). Its function is as follows. Acetylates the N-terminal alanine of ribosomal protein uS5. This Shigella flexneri protein is [Ribosomal protein uS5]-alanine N-acetyltransferase (rimJ).